Consider the following 85-residue polypeptide: Small ribosomal subunit protein bS18 (85 aa).

A compositionally biased stretch (gly residues) spans 1–12 (MAFAQAGGGGGQ). Positions 1–22 (MAFAQAGGGGGQRRPFFRRRKT) are disordered.

The protein belongs to the bacterial ribosomal protein bS18 family. Part of the 30S ribosomal subunit. Forms a tight heterodimer with protein bS6.

Its function is as follows. Binds as a heterodimer with protein bS6 to the central domain of the 16S rRNA, where it helps stabilize the platform of the 30S subunit. This Azorhizobium caulinodans (strain ATCC 43989 / DSM 5975 / JCM 20966 / LMG 6465 / NBRC 14845 / NCIMB 13405 / ORS 571) protein is Small ribosomal subunit protein bS18.